The primary structure comprises 173 residues: Probable transcription termination protein NusA (173 aa).

Positions 31 to 97 (DEKIVFVVKE…EDVWVKKFGN (67 aa)) constitute a KH domain. Basic and acidic residues predominate over residues 147-162 (ADNRPKKDEIPEKAAE). The segment at 147–173 (ADNRPKKDEIPEKAAESSENVQAEENQ) is disordered. Residues 163–173 (SSENVQAEENQ) are compositionally biased toward polar residues.

This sequence belongs to the NusA family.

Its subcellular location is the cytoplasm. Participates in transcription termination. The chain is Probable transcription termination protein NusA from Methanococcus vannielii (strain ATCC 35089 / DSM 1224 / JCM 13029 / OCM 148 / SB).